A 184-amino-acid polypeptide reads, in one-letter code: Tumor necrosis factor alpha-induced protein 8-like protein 2 (184 aa).

At serine 3 the chain carries Phosphoserine.

This sequence belongs to the TNFAIP8 family. TNFAIP8L2 subfamily. May interact with CASP8; however, such result is unclear since could not reproduce the interaction with CASP8. Interacts with RAC1. In terms of processing, phosphorylated by TAK1/MAP3K7; this phosphorylation triggers association with BTRC and subsequent ubiquitination and degradation. Ubiquitinated in a BTRC-depdent manner; leading to degradation mediated through the proteasome pathway.

The protein localises to the cytoplasm. Its subcellular location is the nucleus. The protein resides in the lysosome. Functionally, acts as a negative regulator of innate and adaptive immunity by maintaining immune homeostasis. Plays a regulatory role in the Toll-like signaling pathway by determining the strength of LPS-induced signaling and gene expression. Inhibits TCR-mediated T-cell activation and negatively regulate T-cell function to prevent hyperresponsiveness. Also inhibits autolysosome formation via negatively modulating MTOR activation by interacting with RAC1 and promoting the disassociation of the RAC1-MTOR complex. Plays an essential role in NK-cell biology by acting as a checkpoint and displaying an expression pattern correlating with NK-cell maturation process and by negatively regulating NK-cell maturation and antitumor immunity. Mechanistically, suppresses IL-15-triggered mTOR activity in NK-cells. The protein is Tumor necrosis factor alpha-induced protein 8-like protein 2 (TNFAIP8L2) of Oryctolagus cuniculus (Rabbit).